We begin with the raw amino-acid sequence, 1134 residues long: Envelopment polyprotein (1134 aa).

Positions 1 to 18 (MGIWKWLVMASLVWPVLT) are cleaved as a signal peptide. At 19–487 (LRNVYDMKIE…GFHGWATAAL (469 aa)) the chain is on the lumenal side. 8 cysteine pairs are disulfide-bonded: Cys-29–Cys-151, Cys-63–Cys-157, Cys-109–Cys-128, Cys-133–Cys-138, Cys-175–Cys-185, Cys-210–Cys-247, Cys-234–Cys-351, and Cys-380–Cys-389. Residue Asn-134 is glycosylated (N-linked (GlcNAc...) asparagine; by host). 2 N-linked (GlcNAc...) asparagine; by host glycosylation sites follow: Asn-235 and Asn-347. N-linked (GlcNAc...) asparagine; by host glycosylation occurs at Asn-399. Intrachain disulfides connect Cys-405–Cys-424 and Cys-452–Cys-475. A helical transmembrane segment spans residues 488–508 (LVTFCFGWVLIPAVTFIILAI). Topologically, residues 509–627 (LKFIANIFHT…LNLFRYKSRC (119 aa)) are cytoplasmic. Residues 516–533 (FHTSNQENRLKSVLRKIK) are binding to the ribonucleoprotein. 2 consecutive CCHC-type zinc fingers follow at residues 545–565 (CDVC…GVSC) and 570–591 (CPYC…YKVC). Binding to the ribonucleoprotein stretches follow at residues 588 to 605 (YKVC…KKTV), 592 to 603 (QVTHRFRDDLKK), and 611 to 625 (TPGC…RYKS). The region spanning 611-634 (TPGCYRTLNLFRYKSRCYIFTMWI) is the ITAM domain. The YxxL motif lies at 615-618 (YRTL). The chain crosses the membrane as a helical span at residues 628–648 (YIFTMWIFLLVLESILWAASA). Over 649–1104 (SETPLTPVWN…EWISGIFSGN (456 aa)) the chain is Lumenal. Disulfide bonds link Cys-734-Cys-769, Cys-738-Cys-776, Cys-750-Cys-884, Cys-764-Cys-895, Cys-779-Cys-903, Cys-805-Cys-814, and Cys-822-Cys-831. Residues 756-776 (YQYETSWGCNPSDCPGCGTGC) form a fusion loop region. An N-linked (GlcNAc...) asparagine; by host glycan is attached at Asn-927. 5 cysteine pairs are disulfide-bonded: Cys-969–Cys-999, Cys-992–Cys-1044, Cys-1009–Cys-1014, Cys-1045–Cys-1050, and Cys-1084–Cys-1088. A helical membrane pass occupies residues 1105-1125 (WIVLIVLCVFLLFSLVLLSIL). The binding to the ribonucleoprotein stretch occupies residues 1121-1134 (LLSILCPVRKHKKS). Residues 1126–1134 (CPVRKHKKS) are Cytoplasmic-facing.

The protein belongs to the hantavirus envelope glycoprotein family. Homodimer. Homotetramer; forms heterotetrameric Gn-Gc spikes in the pre-fusion conformation. Interacts (via C-terminus) with the nucleoprotein. Interacts with host TUFM; this interaction contributes to the virus-induced degradation of mitochondria by autophagy, which leads to degradation of host MAVS and inhibition of type I interferon (IFN) responses. Interacts with host MAP1LC3B; this interaction contributes to the virus-induced degradation of mitochondria by autophagy, which leads to degradation of host MAVS and inhibition of type I interferon (IFN) responses. As to quaternary structure, homodimer. Homotetramer; forms heterotetrameric Gn-Gc spikes in the pre-fusion conformation. Homotrimer; forms homotrimer in the post-fusion conformation at acidic pH. Interacts (via C-terminus) with the nucleoprotein. In terms of processing, envelope polyprotein precursor is quickly cleaved in vivo just after synthesis, presumably by host signal peptidase.

It localises to the virion membrane. The protein localises to the host cell surface. Its subcellular location is the host Golgi apparatus membrane. It is found in the host endoplasmic reticulum membrane. The protein resides in the host mitochondrion. Its function is as follows. Forms homotetramers with glycoprotein C at the surface of the virion. Attaches the virion to host cell receptors including integrin ITGAV/ITGB3. This attachment induces virion internalization predominantly through clathrin-dependent endocytosis. May also bind to host C1QBP for virus entry into the host cell. Mediates the assembly and budding of infectious virus particles through its interaction with the nucleocapsid protein and the viral genome. May dysregulate normal immune and endothelial cell responses through an ITAM motif. Translocates to mitochondria, binds to host TUFM and recruits MAP1LC3B. These interactions induce mitochondrial autophagy and therefore destruction of host MAVS leading to inhibition of type I interferon (IFN) responses. Concomitant breakdown of glycoprotein N is apparently prevented by the nucleoprotein that may inhibit Gn-stimulated autophagosome-lysosome fusion. Interacts with the viral genomic RNA. Functionally, forms homotetramers with glycoprotein N at the surface of the virion. Attaches the virion to host cell receptors including integrin ITGAV/ITGB3. This attachment induces virion internalization predominantly through clathrin-dependent endocytosis. May also bind to host C1QBP for virus entry into the host cell. Class II fusion protein that promotes fusion of viral membrane with host endosomal membrane after endocytosis of the virion. The polypeptide is Envelopment polyprotein (GP) (Apodemus agrarius (Eurasian field mouse)).